The following is a 343-amino-acid chain: Aspartate carbamoyltransferase catalytic subunit (343 aa).

Arg71 and Thr72 together coordinate carbamoyl phosphate. Lys99 serves as a coordination point for L-aspartate. Arg121, His149, and Gln152 together coordinate carbamoyl phosphate. Positions 195 and 249 each coordinate L-aspartate. Residues Gly290 and Pro291 each contribute to the carbamoyl phosphate site.

This sequence belongs to the aspartate/ornithine carbamoyltransferase superfamily. ATCase family. Heterododecamer (2C3:3R2) of six catalytic PyrB chains organized as two trimers (C3), and six regulatory PyrI chains organized as three dimers (R2).

The enzyme catalyses carbamoyl phosphate + L-aspartate = N-carbamoyl-L-aspartate + phosphate + H(+). It functions in the pathway pyrimidine metabolism; UMP biosynthesis via de novo pathway; (S)-dihydroorotate from bicarbonate: step 2/3. Functionally, catalyzes the condensation of carbamoyl phosphate and aspartate to form carbamoyl aspartate and inorganic phosphate, the committed step in the de novo pyrimidine nucleotide biosynthesis pathway. The polypeptide is Aspartate carbamoyltransferase catalytic subunit (Rhodopirellula baltica (strain DSM 10527 / NCIMB 13988 / SH1)).